The sequence spans 614 residues: MDRKVAVPEDGPPVVSWLPEEGEKLDQEGEDQVKDRGQWTNKMEFVLSVAGEIIGLGNVWRFPYLCYKNGGGAFFIPYFIFFFTCGIPVFFLEVALGQYTSQGSVTAWRKICPLLQGIGLASVVIESYLNIYYIIILAWALFYLFSSFTSELPWTTCTNTWNTEHCMDFLNHSGARTATSSENFTSPVMEFWERRVLGITSGIHDLGALRWELALCLLLAWLICYFCIWKGVKTTGKVVYFTATFPYLMLVILLIRGITLPGAYQGVIYYLKPDLLRLKDPQVWMDAGTQIFFSFAICQGCLTALGSYNKYHNNCYRDSIALCFLNSATSFAAGFVVFSILGFMAQEQGLPISEVAESGPGLAFIAFPKAVTMMPLSQLWSCLFFIMLIFLGLDSQFVCVECLVTASMDMFPSQLRKSGRRELLILAIAVFCYLAGLFLVTEGGMYIFQLFDYYASSGICLLFLAMFEVICISWVYGADRFYDNIEDMIGYRPWPLVKISWLFLTPGLCLATFLFSLSQYTPLKYNNIYVYPPWGYSIGWFLALSSMICVPLFVIITLLKTRGSFKKRLRQLTTPDPSLPQPKQHLYLDGGTSQDCGPSPTKEGLIVGEKETHL.

Positions 1 to 33 (MDRKVAVPEDGPPVVSWLPEEGEKLDQEGEDQV) are disordered. At 1–44 (MDRKVAVPEDGPPVVSWLPEEGEKLDQEGEDQVKDRGQWTNKME) the chain is on the cytoplasmic side. A compositionally biased stretch (basic and acidic residues) spans 21–33 (EGEKLDQEGEDQV). 3 helical membrane passes run 45–65 (FVLS…FPYL), 73–92 (AFFI…VFFL), and 117–137 (GIGL…IIIL). Residues 138-210 (AWALFYLFSS…SGIHDLGALR (73 aa)) are Extracellular-facing. A disulfide bridge connects residues Cys-157 and Cys-166. 2 N-linked (GlcNAc...) asparagine glycosylation sites follow: Asn-171 and Asn-183. 9 helical membrane passes run 211–229 (WELA…FCIW), 238–255 (VVYF…ILLI), 291–308 (IFFS…LGSY), 320–341 (IALC…FSIL), 374–393 (MPLS…FLGL), 423–441 (LLIL…FLVT), 458–478 (GICL…VYGA), 499–518 (ISWL…FSLS), and 538–556 (IGWF…FVII). The Cytoplasmic segment spans residues 557 to 614 (TLLKTRGSFKKRLRQLTTPDPSLPQPKQHLYLDGGTSQDCGPSPTKEGLIVGEKETHL). Residues 591-614 (GTSQDCGPSPTKEGLIVGEKETHL) are disordered.

This sequence belongs to the sodium:neurotransmitter symporter (SNF) (TC 2.A.22) family. SLC6A12 subfamily. As to quaternary structure, interacts with LIN7C. Kidney.

It localises to the basolateral cell membrane. Its subcellular location is the cell membrane. The enzyme catalyses 4-aminobutanoate(out) + chloride(out) + 3 Na(+)(out) = 4-aminobutanoate(in) + chloride(in) + 3 Na(+)(in). It carries out the reaction glycine betaine(out) + 2 chloride(out) + 3 Na(+)(out) = glycine betaine(in) + 2 chloride(in) + 3 Na(+)(in). Transporter that mediates cellular uptake of betaine and GABA in a sodium- and chloride-dependent process. May have a role in regulation of GABAergic transmission in the brain through the reuptake of GABA into presynaptic terminals, as well as in osmotic regulation. Probably also involved in renal and hepatic osmotic regulation. This chain is Sodium- and chloride-dependent betaine transporter (SLC6A12), found in Canis lupus familiaris (Dog).